A 130-amino-acid polypeptide reads, in one-letter code: Large ribosomal subunit protein bL20c (130 aa).

This sequence belongs to the bacterial ribosomal protein bL20 family.

It is found in the plastid. It localises to the chloroplast. Functionally, binds directly to 23S ribosomal RNA and is necessary for the in vitro assembly process of the 50S ribosomal subunit. It is not involved in the protein synthesizing functions of that subunit. The polypeptide is Large ribosomal subunit protein bL20c (Oenothera argillicola (Appalachian evening primrose)).